Consider the following 344-residue polypeptide: Phosphoribosylformylglycinamidine cyclo-ligase (344 aa).

It belongs to the AIR synthase family.

It localises to the cytoplasm. It catalyses the reaction 2-formamido-N(1)-(5-O-phospho-beta-D-ribosyl)acetamidine + ATP = 5-amino-1-(5-phospho-beta-D-ribosyl)imidazole + ADP + phosphate + H(+). Its pathway is purine metabolism; IMP biosynthesis via de novo pathway; 5-amino-1-(5-phospho-D-ribosyl)imidazole from N(2)-formyl-N(1)-(5-phospho-D-ribosyl)glycinamide: step 2/2. This is Phosphoribosylformylglycinamidine cyclo-ligase from Leptospira interrogans serogroup Icterohaemorrhagiae serovar Lai (strain 56601).